A 22-amino-acid polypeptide reads, in one-letter code: Cysteine-rich venom protein collettin-a (22 aa).

Basic and acidic residues predominate over residues 1 to 15 (SNKKNYQKEIVDKHN). A disordered region spans residues 1-22 (SNKKNYQKEIVDKHNALRRSVK).

It belongs to the CRISP family. In terms of processing, contains 8 disulfide bonds. In terms of tissue distribution, expressed by the venom gland.

The protein localises to the secreted. This Pseudechis colletti (Collett's snake) protein is Cysteine-rich venom protein collettin-a.